We begin with the raw amino-acid sequence, 514 residues long: Na(+)/H(+) antiporter NhaB (514 aa).

11 helical membrane passes run 21-41, 43-63, 88-108, 143-163, 203-223, 239-259, 304-324, 349-369, 390-410, 448-468, and 484-504; these read LAIVVFLIINPIVFFFISPFI, GWLLVAEFIFTLAMALKCYPL, IMANFEVILLLIFMVAGIFFM, FLDALTVVAVIISVAMGFYGV, LMMHAGVGTALGGVMTVVGEP, FFLRMAPVTIPVFICGLLTCF, ALIAIWLILGLAFHLAAVGLI, QESLPFTALLVVFFSVVAVII, LALFYLFNGLLSSISDNVFVA, ATPNGQAAFLFLLTSSISPLI, and IVLSIIGLLAIEFILPAATIW.

Belongs to the NhaB Na(+)/H(+) (TC 2.A.34) antiporter family.

The protein resides in the cell inner membrane. It carries out the reaction 2 Na(+)(in) + 3 H(+)(out) = 2 Na(+)(out) + 3 H(+)(in). Na(+)/H(+) antiporter that extrudes sodium in exchange for external protons. The sequence is that of Na(+)/H(+) antiporter NhaB from Haemophilus influenzae (strain 86-028NP).